A 252-amino-acid chain; its full sequence is MRFSILTLFPEMFAPLQASILGRGQKSGRLDLNLVQIRDFATDRHQNVDDTPFGGGPGMVLKPDILSHALRATLQGETAHVVYMSPQGSRFDQATAQRLAGYGHVVLLCGRYEGVDERFIDAHVDEELSVGDFVLTGGELPAMMVVDAVSRMVPGVLGDLESAQADSFQTGLLDHPHYTRPAHWVVDGDHYGAPEVLLSGNHGAIAEWRRRQALLRTLIRRPDLLGKAPLSRVEKRLIEALAVDLDALENKH.

Residues Gly110 and 130–135 each bind S-adenosyl-L-methionine; that span reads VGDFVL.

Belongs to the RNA methyltransferase TrmD family. Homodimer.

It localises to the cytoplasm. It carries out the reaction guanosine(37) in tRNA + S-adenosyl-L-methionine = N(1)-methylguanosine(37) in tRNA + S-adenosyl-L-homocysteine + H(+). In terms of biological role, specifically methylates guanosine-37 in various tRNAs. This chain is tRNA (guanine-N(1)-)-methyltransferase, found in Magnetococcus marinus (strain ATCC BAA-1437 / JCM 17883 / MC-1).